The primary structure comprises 250 residues: Transmembrane ascorbate-dependent reductase CYB561 (250 aa).

Residue Met-1 is modified to N-acetylmethionine. Topologically, residues 1–15 are cytoplasmic; sequence MEHSSASVPAALPYY. A helical membrane pass occupies residues 16-36; it reads VAFSQLLGLTVVAVTGAWLGL. Residues 18–219 form the Cytochrome b561 domain; sequence FSQLLGLTVV…FGVVVLYILA (202 aa). Topologically, residues 37–50 are vesicular; that stretch reads YRGGIAWESSLQFN. Residues 51–71 traverse the membrane as a helical segment; the sequence is VHPLCMVIGMIFLQGDALLVY. Heme b contacts are provided by His-52, Arg-72, and Lys-79. Residues 72–83 are Cytoplasmic-facing; the sequence is RVFRREAKRTTK. Positions 79 and 83 each coordinate L-ascorbate. Residues 84-104 form a helical membrane-spanning segment; it reads ILHGLLHVFAFIIALVGLVAV. Heme b contacts are provided by residues His-86, 115–118, and His-120; that span reads DLYS. Over 105-123 the chain is Vesicular; the sequence is FDYHKKKGYADLYSLHSWC. Residues 124-144 traverse the membrane as a helical segment; sequence GILVFVLYFVQWLVGFSFFLF. Residues 145 to 157 lie on the Cytoplasmic side of the membrane; sequence PGASFSLRSRYRP. Residue Arg-152 coordinates L-ascorbate. Residues 158-178 traverse the membrane as a helical segment; it reads QHIFFGATIFLFSVGTALLGL. Heme b is bound by residues His-159 and Glu-180. Topologically, residues 179–197 are vesicular; sequence KEALLFKLGSKYSTFEPEG. Residues 198-218 traverse the membrane as a helical segment; the sequence is VLANVLGLLLVCFGVVVLYIL. At 219–250 the chain is on the cytoplasmic side; that stretch reads AQADWKRPSQAEEQALSMDFKTLTEGDSPSPQ. Lys-224 serves as a coordination point for heme b. Ser-246 and Ser-248 each carry phosphoserine.

Requires heme b as cofactor. Abundantly distributed in a number of neuroendocrine tissues.

It localises to the cytoplasmic vesicle. Its subcellular location is the secretory vesicle. The protein localises to the chromaffin granule membrane. The catalysed reaction is monodehydro-L-ascorbate radical(out) + L-ascorbate(in) = monodehydro-L-ascorbate radical(in) + L-ascorbate(out). In terms of biological role, transmembrane reductase that uses ascorbate as an electron donor in the cytoplasm and transfers electrons across membranes to reduce monodehydro-L-ascorbate radical in the lumen of secretory vesicles. It is therefore involved the regeneration and homeostasis within secretory vesicles of ascorbate which in turn provides reducing equivalents needed to support the activity of intravesicular enzymes. This chain is Transmembrane ascorbate-dependent reductase CYB561, found in Mus musculus (Mouse).